The following is an 810-amino-acid chain: Janus kinase and microtubule-interacting protein 2 (810 aa).

3 coiled-coil regions span residues 13-102, 148-178, and 207-244; these read EALI…EMSR, ERLK…QADK, and RRLM…KEAL. Over residues 261 to 274 the composition is skewed to basic and acidic residues; sequence PKREIPGRAGDGSE. 2 disordered regions span residues 261-280 and 437-465; these read PKRE…SSPD and YDED…DDDL. The stretch at 280–419 forms a coiled coil; sequence DLRRNQKRIA…REKLIRRRKH (140 aa). Coiled-coil stretches lie at residues 468–597 and 664–808; these read SLAA…RERR and EKWI…SNRK.

The protein belongs to the JAKMIP family. In terms of tissue distribution, highly expressed in brain, moderately expressed in thymus, spleen and lung, and weakly expressed in kidney, liver and peripheral blood lymphocytes. Also expressed in adrenal and pituitary glands, as well as testis.

Its subcellular location is the golgi apparatus. This is Janus kinase and microtubule-interacting protein 2 (JAKMIP2) from Homo sapiens (Human).